The chain runs to 393 residues: Autophagy-related protein 18c (393 aa).

WD repeat units follow at residues 27-65 (KEEA…ETFR), 70-114 (DGGF…CISE), 199-239 (AHDS…RLQE), and 244-283 (VDRA…VGED).

This sequence belongs to the WD repeat PROPPIN family. Component of the PI(3,5)P2 regulatory complex at least composed of ATG18, SAC/FIG4, FAB1 and VAC14. In terms of tissue distribution, expressed in roots, stems, flowers and leaves.

The protein resides in the preautophagosomal structure membrane. It is found in the vacuole membrane. Functionally, the PI(3,5)P2 regulatory complex regulates both the synthesis and turnover of phosphatidylinositol 3,5-bisphosphate (PtdIns(3,5)P2). Required for autophagy. This is Autophagy-related protein 18c (ATG18C) from Arabidopsis thaliana (Mouse-ear cress).